Consider the following 661-residue polypeptide: Cartilage acidic protein 1 (661 aa).

An N-terminal signal peptide occupies residues 1-27 (MAPSADPGMSRMLPFLLLLWFLPITEG). An FG-GAP 1; atypical repeat occupies 46–88 (DYDSNPTQLNYGVAVTDVDHDGDFEIVVAGYNGPNLVLKYDRA). An FG-GAP 2; atypical repeat occupies 105–147 (YALRDRQGNAIGVTACDIDGDGREEIYFLNTNNAFSGVATYTD). Residues 283–333 (AGVDDPHQHGRGVALADFNRDGKVDIVYGNWNGPHRLYLQMSTHGKVRFRD) form an FG-GAP 3; atypical repeat. The FG-GAP 4; atypical repeat unit spans residues 395-437 (GDALEPEGRGTGGVVTDFDGDGMLDLILSHGESMAQPLSVFRG). The EGF-like domain occupies 559 to 605 (DTNECIQFPFVCPRDKPVCVNTYGSYRCRTNKKCSRGYEPNEDGTAC). 3 disulfides stabilise this stretch: C563/C577, C570/C586, and C592/C605. O-linked (GalNAc...) threonine glycosylation is found at T608, T618, T619, T621, and T626.

O-glycosylated. As to expression, expressed in the interterritorial matrix of articular deep zone cartilage (at protein level). Isoform 1 and isoform 2 are expressed in brain. Isoform 1 is detected in lung and chondrocytes. Detected in cartilage, bone, cultured chondrocytes and lung, and at low levels in heart. Not detected in osteoblasts.

The protein resides in the secreted. The protein localises to the extracellular space. Its subcellular location is the extracellular matrix. This is Cartilage acidic protein 1 (CRTAC1) from Homo sapiens (Human).